The sequence spans 484 residues: Mitogen-activated protein kinase SLT2/MPK1 (484 aa).

Residues 23–318 enclose the Protein kinase domain; sequence FQLIKEIGHG…VDEALEHPYL (296 aa). ATP-binding positions include 29-37 and Lys54; that span reads IGHGAYGIV. Asp153 serves as the catalytic Proton acceptor. A Phosphothreonine modification is found at Thr190. Residues 190–192 carry the TXY motif; that stretch reads TEY. Tyr192 carries the post-translational modification Phosphotyrosine. The segment covering 383 to 392 has biased composition (low complexity); sequence QQQQQQQQQP. Disordered regions lie at residues 383 to 403 and 426 to 464; these read QQQQ…AAAS and IHSQ…PQND.

It belongs to the protein kinase superfamily. CMGC Ser/Thr protein kinase family. MAP kinase subfamily. In terms of assembly, interacts with RLM1. Mg(2+) serves as cofactor. Post-translationally, dually phosphorylated on Thr-190 and Tyr-192, which activates the enzyme.

The enzyme catalyses L-seryl-[protein] + ATP = O-phospho-L-seryl-[protein] + ADP + H(+). It catalyses the reaction L-threonyl-[protein] + ATP = O-phospho-L-threonyl-[protein] + ADP + H(+). Its activity is regulated as follows. Activated by tyrosine and threonine phosphorylation by MKK1 and MKK2. Its function is as follows. Serine/threonine protein kinase involved in a signal transduction pathway that plays a role in yeast cell morphogenesis and cell growth. This pathway seems to start by SMP3; then involve the kinase PKC1 that may act the BCK1 kinase that then phosphorylates MKK1 and MKK2 which themselves phosphorylate the SLT2/MPK1 kinase which itself then phosphorylates and activates the transcription factor RLM1. Directly phosphorylates BCY1 upon TOR complex 1 (TORC1) inhibition. The protein is Mitogen-activated protein kinase SLT2/MPK1 (SLT2) of Saccharomyces cerevisiae (strain ATCC 204508 / S288c) (Baker's yeast).